A 1043-amino-acid polypeptide reads, in one-letter code: tRNA wybutosine-synthesizing protein 2/3/4 (1043 aa).

The tRNA wybutosine-synthesizing protein 3 homolog stretch occupies residues 1–233 (MEFDRRKAAA…PVLQNGAKHG (233 aa)). Residues 53-75 (RVSVLAQPPPPQQADPGGAKTKK) form a disordered region. Kelch repeat units follow at residues 360 to 410 (DIYV…AVDR), 412 to 460 (VYVF…SYGS), 461 to 510 (KLFL…IYKD), and 512 to 559 (LGIL…VIID). The tRNA wybutosine-synthesizing protein 2 homolog stretch occupies residues 700–1041 (QPDDSCVFEE…RHLVVDVKCR (342 aa)). Residues Lys874 and 942–943 (DN) contribute to the S-adenosyl-L-methionine site.

The protein in the C-terminal section; belongs to the class I-like SAM-binding methyltransferase superfamily. TRM5/TYW2 family. It in the N-terminal section; belongs to the TYW3 family.

The enzyme catalyses 4-demethyl-7-[(3S)-3-amino-3-carboxypropyl]wyosine(37) in tRNA(Phe) + S-adenosyl-L-methionine = 7-[(3S)-3-amino-3-carboxypropyl]wyosine(37) in tRNA(Phe) + S-adenosyl-L-homocysteine + H(+). It catalyses the reaction 4-demethylwyosine(37) in tRNA(Phe) + S-adenosyl-L-methionine = 4-demethyl-7-[(3S)-3-amino-3-carboxypropyl]wyosine(37) in tRNA(Phe) + S-methyl-5'-thioadenosine + H(+). Its pathway is tRNA modification; wybutosine-tRNA(Phe) biosynthesis. In terms of biological role, S-adenosyl-L-methionine-dependent transferase that acts as a component of the wybutosine biosynthesis pathway. Wybutosine is a hyper modified guanosine with a tricyclic base found at the 3'-position adjacent to the anticodon of eukaryotic phenylalanine tRNA. This chain is tRNA wybutosine-synthesizing protein 2/3/4, found in Oryza sativa subsp. japonica (Rice).